A 22-amino-acid chain; its full sequence is 50 kDa cell wall protein (22 aa).

The protein localises to the secreted. It is found in the cell wall. This Nicotiana tabacum (Common tobacco) protein is 50 kDa cell wall protein.